The primary structure comprises 920 residues: Dynamin-B (920 aa).

Positions 65–84 (NSNNNNNNNNNNKINKNNNN) are disordered. The Dynamin-type G domain occupies 154–448 (EITLPQIIVV…LTKHIRDTFP (295 aa)). The tract at residues 164-171 (GSQSSGKS) is G1 motif. 164-172 (GSQSSGKSS) is a binding site for GTP. The segment at 190–192 (VTR) is G2 motif. Positions 204 to 241 (TTSRNNVNENEDEDEDDNYYDNDNDDNSLEEWGEFGHT) are disordered. Acidic residues predominate over residues 212–236 (ENEDEDEDDNYYDNDNDDNSLEEWG). Positions 290–293 (DLPG) are G3 motif. Residues 359-362 (TKLD) are G4 motif. Residues 359–365 (TKLDLMD) and 390–393 (NRSQ) contribute to the GTP site. Residues 389-392 (VNRS) are G5 motif. Residues 680-790 (FQSTSSTSSS…EIQIQQQQQQ (111 aa)) form a disordered region. Composition is skewed to low complexity over residues 681 to 705 (QSTS…NSNP) and 724 to 751 (QIKQ…QKQQ). A coiled-coil region spans residues 724-751 (QIKQQQQQQQQQQQQSYQQQQQQQQKQQ). Positions 765-774 (PPSPPSPPQP) are enriched in pro residues. Over residues 775 to 790 (KQQQSHEIQIQQQQQQ) the composition is skewed to low complexity. A GED domain is found at 825–916 (IYLLRRLLLA…SLSQSENSDL (92 aa)).

This sequence belongs to the TRAFAC class dynamin-like GTPase superfamily. Dynamin/Fzo/YdjA family.

The protein localises to the cytoplasm. In terms of biological role, enzyme hydrolyzing GTP. The chain is Dynamin-B (dymB) from Dictyostelium discoideum (Social amoeba).